Here is a 186-residue protein sequence, read N- to C-terminus: Probable nicotinate-nucleotide adenylyltransferase (186 aa).

It belongs to the NadD family.

The enzyme catalyses nicotinate beta-D-ribonucleotide + ATP + H(+) = deamido-NAD(+) + diphosphate. It functions in the pathway cofactor biosynthesis; NAD(+) biosynthesis; deamido-NAD(+) from nicotinate D-ribonucleotide: step 1/1. In terms of biological role, catalyzes the reversible adenylation of nicotinate mononucleotide (NaMN) to nicotinic acid adenine dinucleotide (NaAD). In Thermus thermophilus (strain ATCC BAA-163 / DSM 7039 / HB27), this protein is Probable nicotinate-nucleotide adenylyltransferase.